Consider the following 130-residue polypeptide: Capsid protein (130 aa).

A viral RNA-binding region spans residues 32-105; sequence EWISSNSRSQ…FATNSDCELI (74 aa).

It belongs to the Leviviricetes capsid protein family. In terms of assembly, homodimer. The capsid proteins form dimers that assemble by group of 5. Twelve such pentamers are linked together with free dimers. The homodimers binds to the viral RNA via an operator hairpin, but also to many other RNA sequences in the viral genome; this interaction probably shifts the virus from the replicative to the assembly phase and ensures specific encapsidation of the viral genome.

The protein localises to the virion. Its function is as follows. Capsid protein self-assembles to form an icosahedral capsid with a T=3 symmetry, about 26 nm in diameter, and consisting of 89 capsid proteins dimers (178 capsid proteins). Involved in viral genome encapsidation through the interaction between a capsid protein dimer and the multiple packaging signals present in the RNA genome. The capsid also contains 1 copy of the A2 maturation protein. Functionally, acts as a translational repressor of viral replicase synthesis late in infection. This latter function is the result of capsid protein interaction with an RNA hairpin which contains the replicase ribosome-binding site. The sequence is that of Capsid protein from Enterobacteria phage ZR (Bacteriophage ZR).